A 356-amino-acid polypeptide reads, in one-letter code: uncharacterized protein (356 aa).

Residues M1–S21 form the signal peptide.

This is an uncharacterized protein from Escherichia coli (strain K12).